The primary structure comprises 308 residues: Protein translocase subunit SecF (308 aa).

The next 6 helical transmembrane spans lie at 18 to 38, 134 to 154, 160 to 180, 193 to 213, 244 to 264, and 272 to 292; these read AYVFSGVLILLSLVSLVTRGL, GAIYSILGALLVIFVYILIRF, LGAVVALFHDVLITLGLFSLL, TIIAAFLTIVGYSLNDTVVVF, IITSGTTLLVVVILFIFGGEV, and LIVGIVIGTYSSIFVASPVVI.

Belongs to the SecD/SecF family. SecF subfamily. Forms a complex with SecD. Part of the essential Sec protein translocation apparatus which comprises SecA, SecYEG and auxiliary proteins SecDF. Other proteins may also be involved.

The protein localises to the cell inner membrane. Its function is as follows. Part of the Sec protein translocase complex. Interacts with the SecYEG preprotein conducting channel. SecDF uses the proton motive force (PMF) to complete protein translocation after the ATP-dependent function of SecA. This is Protein translocase subunit SecF from Rhodothermus marinus (strain ATCC 43812 / DSM 4252 / R-10) (Rhodothermus obamensis).